Consider the following 193-residue polypeptide: 3-isopropylmalate dehydratase small subunit (193 aa).

It belongs to the LeuD family. LeuD type 1 subfamily. As to quaternary structure, heterodimer of LeuC and LeuD.

It carries out the reaction (2R,3S)-3-isopropylmalate = (2S)-2-isopropylmalate. It participates in amino-acid biosynthesis; L-leucine biosynthesis; L-leucine from 3-methyl-2-oxobutanoate: step 2/4. Its function is as follows. Catalyzes the isomerization between 2-isopropylmalate and 3-isopropylmalate, via the formation of 2-isopropylmaleate. This Bacillus cereus (strain AH820) protein is 3-isopropylmalate dehydratase small subunit.